The following is a 396-amino-acid chain: Elongation factor Tu (396 aa).

The 197-residue stretch at 10-206 (KPHVNVGTIG…ALDTYIPTPE (197 aa)) folds into the tr-type G domain. Residues 19 to 26 (GHVDHGKT) are G1. 19 to 26 (GHVDHGKT) contributes to the GTP binding site. Thr-26 contributes to the Mg(2+) binding site. Positions 60 to 64 (GITIN) are G2. The tract at residues 81–84 (DCPG) is G3. Residues 81 to 85 (DCPGH) and 136 to 139 (NKAD) contribute to the GTP site. The segment at 136–139 (NKAD) is G4. Positions 174 to 176 (SAK) are G5.

This sequence belongs to the TRAFAC class translation factor GTPase superfamily. Classic translation factor GTPase family. EF-Tu/EF-1A subfamily. Monomer.

The protein localises to the cytoplasm. The enzyme catalyses GTP + H2O = GDP + phosphate + H(+). GTP hydrolase that promotes the GTP-dependent binding of aminoacyl-tRNA to the A-site of ribosomes during protein biosynthesis. The protein is Elongation factor Tu of Janthinobacterium sp. (strain Marseille) (Minibacterium massiliensis).